A 180-amino-acid polypeptide reads, in one-letter code: Inner membrane-spanning protein YciB (180 aa).

Helical transmembrane passes span 11–31 (ILFF…ALII), 52–72 (IIMG…NKVE), 76–96 (WKVT…QYGF), 121–141 (LAWA…SQYC), and 149–169 (FKSF…GIYV).

The protein belongs to the YciB family.

The protein resides in the cell inner membrane. Plays a role in cell envelope biogenesis, maintenance of cell envelope integrity and membrane homeostasis. This is Inner membrane-spanning protein YciB from Mannheimia succiniciproducens (strain KCTC 0769BP / MBEL55E).